A 102-amino-acid polypeptide reads, in one-letter code: Small ribosomal subunit protein uS10 (102 aa).

Belongs to the universal ribosomal protein uS10 family. In terms of assembly, part of the 30S ribosomal subunit.

Functionally, involved in the binding of tRNA to the ribosomes. The sequence is that of Small ribosomal subunit protein uS10 from Trichlorobacter lovleyi (strain ATCC BAA-1151 / DSM 17278 / SZ) (Geobacter lovleyi).